A 222-amino-acid polypeptide reads, in one-letter code: PKHD-type hydroxylase cce_3668 (222 aa).

In terms of domain architecture, Fe2OG dioxygenase spans 78 to 175; sequence HIHSLRFSRY…RLVVVGWVHS (98 aa). Fe cation-binding residues include histidine 96, aspartate 98, and histidine 156. Arginine 166 contributes to the 2-oxoglutarate binding site.

Requires Fe(2+) as cofactor. The cofactor is L-ascorbate.

The polypeptide is PKHD-type hydroxylase cce_3668 (Crocosphaera subtropica (strain ATCC 51142 / BH68) (Cyanothece sp. (strain ATCC 51142))).